The primary structure comprises 419 residues: Phospho-N-acetylmuramoyl-pentapeptide-transferase (419 aa).

Helical transmembrane passes span Y22–G42, T72–A92, I99–I119, I135–V155, V208–N228, G238–S258, L278–Y298, F303–I323, L328–F348, and K396–L416.

The protein belongs to the glycosyltransferase 4 family. MraY subfamily. Requires Mg(2+) as cofactor.

The protein resides in the cell inner membrane. The enzyme catalyses UDP-N-acetyl-alpha-D-muramoyl-L-alanyl-gamma-D-glutamyl-meso-2,6-diaminopimeloyl-D-alanyl-D-alanine + di-trans,octa-cis-undecaprenyl phosphate = di-trans,octa-cis-undecaprenyl diphospho-N-acetyl-alpha-D-muramoyl-L-alanyl-D-glutamyl-meso-2,6-diaminopimeloyl-D-alanyl-D-alanine + UMP. It participates in cell wall biogenesis; peptidoglycan biosynthesis. Its function is as follows. Catalyzes the initial step of the lipid cycle reactions in the biosynthesis of the cell wall peptidoglycan: transfers peptidoglycan precursor phospho-MurNAc-pentapeptide from UDP-MurNAc-pentapeptide onto the lipid carrier undecaprenyl phosphate, yielding undecaprenyl-pyrophosphoryl-MurNAc-pentapeptide, known as lipid I. The chain is Phospho-N-acetylmuramoyl-pentapeptide-transferase from Porphyromonas gingivalis (strain ATCC 33277 / DSM 20709 / CIP 103683 / JCM 12257 / NCTC 11834 / 2561).